A 373-amino-acid chain; its full sequence is Queuine tRNA-ribosyltransferase accessory subunit 2 (373 aa).

4 residues coordinate Zn(2+): Cys-320, Cys-322, Cys-325, and His-351.

The protein belongs to the queuine tRNA-ribosyltransferase family. QTRT2 subfamily. Heterodimer of a catalytic subunit and an accessory subunit. The cofactor is Zn(2+).

Its subcellular location is the cytoplasm. In terms of biological role, non-catalytic subunit of the queuine tRNA-ribosyltransferase (TGT) that catalyzes the base-exchange of a guanine (G) residue with queuine (Q) at position 34 (anticodon wobble position) in tRNAs with GU(N) anticodons (tRNA-Asp, -Asn, -His and -Tyr), resulting in the hypermodified nucleoside queuosine (7-(((4,5-cis-dihydroxy-2-cyclopenten-1-yl)amino)methyl)-7-deazaguanosine). This Caenorhabditis elegans protein is Queuine tRNA-ribosyltransferase accessory subunit 2.